The following is a 135-amino-acid chain: Single-stranded DNA-binding protein RIM1, mitochondrial (135 aa).

The transit peptide at 1–17 (MFLRTQARFFHATTKKM) directs the protein to the mitochondrion. The SSB domain maps to 19–117 (FSKMSIVGRI…LVQKDINLLK (99 aa)).

In terms of assembly, homotetramer. Interacts with PIF1.

The protein localises to the mitochondrion. Its function is as follows. This protein binds preferentially and cooperatively to single-stranded DNA (ssDNS). Involved in mitochondrial DNA replication. Stimulates PIF1 helicase activity. The polypeptide is Single-stranded DNA-binding protein RIM1, mitochondrial (RIM1) (Saccharomyces cerevisiae (strain ATCC 204508 / S288c) (Baker's yeast)).